The chain runs to 360 residues: Phospho-N-acetylmuramoyl-pentapeptide-transferase (360 aa).

10 consecutive transmembrane segments (helical) span residues 26–46 (AIVSLLTALFISLWMGPRMIA), 72–92 (PTMGGIMILTAIVVSVLLWAY), 94–114 (SNPYVWCVLVVLVGYGIIGFV), 132–152 (WKYFWMSVIALGVAFALYLAG), 168–188 (VMPQLGLFYVLLAYFVIVGTG), 199–219 (GLAIMPTVFVAAGFALVAWAT), 236–256 (AGELVIVCTAIVGAGLGFLWF), 263–283 (VFMGDVGSLALGGALGIIAVL), 288–308 (FLLVIMGGVFVVETLSVILQV), and 338–358 (VIVRFWIISLMLVLIGLATLK).

This sequence belongs to the glycosyltransferase 4 family. MraY subfamily. Mg(2+) serves as cofactor.

It is found in the cell inner membrane. The enzyme catalyses UDP-N-acetyl-alpha-D-muramoyl-L-alanyl-gamma-D-glutamyl-meso-2,6-diaminopimeloyl-D-alanyl-D-alanine + di-trans,octa-cis-undecaprenyl phosphate = di-trans,octa-cis-undecaprenyl diphospho-N-acetyl-alpha-D-muramoyl-L-alanyl-D-glutamyl-meso-2,6-diaminopimeloyl-D-alanyl-D-alanine + UMP. Its pathway is cell wall biogenesis; peptidoglycan biosynthesis. Its function is as follows. Catalyzes the initial step of the lipid cycle reactions in the biosynthesis of the cell wall peptidoglycan: transfers peptidoglycan precursor phospho-MurNAc-pentapeptide from UDP-MurNAc-pentapeptide onto the lipid carrier undecaprenyl phosphate, yielding undecaprenyl-pyrophosphoryl-MurNAc-pentapeptide, known as lipid I. The sequence is that of Phospho-N-acetylmuramoyl-pentapeptide-transferase from Citrobacter koseri (strain ATCC BAA-895 / CDC 4225-83 / SGSC4696).